Reading from the N-terminus, the 360-residue chain is S-adenosylmethionine:tRNA ribosyltransferase-isomerase (360 aa).

The protein belongs to the QueA family. In terms of assembly, monomer.

It is found in the cytoplasm. It carries out the reaction 7-aminomethyl-7-carbaguanosine(34) in tRNA + S-adenosyl-L-methionine = epoxyqueuosine(34) in tRNA + adenine + L-methionine + 2 H(+). Its pathway is tRNA modification; tRNA-queuosine biosynthesis. In terms of biological role, transfers and isomerizes the ribose moiety from AdoMet to the 7-aminomethyl group of 7-deazaguanine (preQ1-tRNA) to give epoxyqueuosine (oQ-tRNA). The sequence is that of S-adenosylmethionine:tRNA ribosyltransferase-isomerase from Sinorhizobium medicae (strain WSM419) (Ensifer medicae).